Reading from the N-terminus, the 946-residue chain is Bifunctional glutamine synthetase adenylyltransferase/adenylyl-removing enzyme (946 aa).

The segment at M1–E440 is adenylyl removase. An adenylyl transferase region spans residues S449 to E946.

It belongs to the GlnE family. It depends on Mg(2+) as a cofactor.

The catalysed reaction is [glutamine synthetase]-O(4)-(5'-adenylyl)-L-tyrosine + phosphate = [glutamine synthetase]-L-tyrosine + ADP. It catalyses the reaction [glutamine synthetase]-L-tyrosine + ATP = [glutamine synthetase]-O(4)-(5'-adenylyl)-L-tyrosine + diphosphate. In terms of biological role, involved in the regulation of glutamine synthetase GlnA, a key enzyme in the process to assimilate ammonia. When cellular nitrogen levels are high, the C-terminal adenylyl transferase (AT) inactivates GlnA by covalent transfer of an adenylyl group from ATP to specific tyrosine residue of GlnA, thus reducing its activity. Conversely, when nitrogen levels are low, the N-terminal adenylyl removase (AR) activates GlnA by removing the adenylyl group by phosphorolysis, increasing its activity. The regulatory region of GlnE binds the signal transduction protein PII (GlnB) which indicates the nitrogen status of the cell. This Escherichia coli O8 (strain IAI1) protein is Bifunctional glutamine synthetase adenylyltransferase/adenylyl-removing enzyme.